We begin with the raw amino-acid sequence, 248 residues long: Probable transcriptional regulatory protein Fphi_1565 (248 aa).

It belongs to the TACO1 family.

It is found in the cytoplasm. The polypeptide is Probable transcriptional regulatory protein Fphi_1565 (Francisella philomiragia subsp. philomiragia (strain ATCC 25017 / CCUG 19701 / FSC 153 / O#319-036)).